A 380-amino-acid polypeptide reads, in one-letter code: Carbamoyl phosphate synthase small chain (380 aa).

Residues 1-187 (MTTSTRGAAK…VVPAIGAKRF (187 aa)) form a CPSase region. L-glutamine-binding residues include Ser55, Gly236, and Gly238. Residues 188 to 380 (TVAAVDLGIK…FVSLMEGQRA (193 aa)) form the Glutamine amidotransferase type-1 domain. Cys264 functions as the Nucleophile in the catalytic mechanism. L-glutamine contacts are provided by Phe265, Gln268, Asn306, Gly308, and Phe309. Catalysis depends on residues His354 and Glu356.

It belongs to the CarA family. In terms of assembly, composed of two chains; the small (or glutamine) chain promotes the hydrolysis of glutamine to ammonia, which is used by the large (or ammonia) chain to synthesize carbamoyl phosphate. Tetramer of heterodimers (alpha,beta)4.

The catalysed reaction is hydrogencarbonate + L-glutamine + 2 ATP + H2O = carbamoyl phosphate + L-glutamate + 2 ADP + phosphate + 2 H(+). It carries out the reaction L-glutamine + H2O = L-glutamate + NH4(+). Its pathway is amino-acid biosynthesis; L-arginine biosynthesis; carbamoyl phosphate from bicarbonate: step 1/1. It functions in the pathway pyrimidine metabolism; UMP biosynthesis via de novo pathway; (S)-dihydroorotate from bicarbonate: step 1/3. Functionally, small subunit of the glutamine-dependent carbamoyl phosphate synthetase (CPSase). CPSase catalyzes the formation of carbamoyl phosphate from the ammonia moiety of glutamine, carbonate, and phosphate donated by ATP, constituting the first step of 2 biosynthetic pathways, one leading to arginine and/or urea and the other to pyrimidine nucleotides. The small subunit (glutamine amidotransferase) binds and cleaves glutamine to supply the large subunit with the substrate ammonia. In Streptomyces avermitilis (strain ATCC 31267 / DSM 46492 / JCM 5070 / NBRC 14893 / NCIMB 12804 / NRRL 8165 / MA-4680), this protein is Carbamoyl phosphate synthase small chain.